Consider the following 272-residue polypeptide: ATP phosphoribosyltransferase regulatory subunit (272 aa).

It belongs to the class-II aminoacyl-tRNA synthetase family. HisZ subfamily. As to quaternary structure, heteromultimer composed of HisG and HisZ subunits.

Its subcellular location is the cytoplasm. It participates in amino-acid biosynthesis; L-histidine biosynthesis; L-histidine from 5-phospho-alpha-D-ribose 1-diphosphate: step 1/9. Functionally, required for the first step of histidine biosynthesis. May allow the feedback regulation of ATP phosphoribosyltransferase activity by histidine. The sequence is that of ATP phosphoribosyltransferase regulatory subunit from Staphylococcus aureus (strain MRSA252).